A 248-amino-acid chain; its full sequence is MAVQHLLFGVRRSCTFILACRRTAFQSSRAFTSIYTQFKVTDTKNIFRPLVFPVRVASAFTFTSAAVAKDVLLFEHDRTRFFRLLAIFCGGQFLFWAYLGHFAFTSLRDTRKYSEPQKVRTELGGFFSFDMNLGSNAWRYGFTSGCLIIGGGILALALLFSRRSVSRVILHKGGAKVSVYTQSPLGPQRSHHLTVPLSQVACYAHRQESHSFIPLKVKGYKFYFLLDKEGTVNNPKLFDITVGAYRPL.

3 consecutive transmembrane segments (helical) span residues 46–68, 84–104, and 140–160; these read IFRP…AAVA, LLAI…HFAF, and YGFT…ALLF.

Belongs to the TMEM223 family.

It localises to the mitochondrion inner membrane. Functionally, mitochondrial ribosome-associated protein involved in the first steps of cytochrome c oxidase complex (complex IV) biogenesis. Stimulates the translation of MT-CO1 mRNA and is a constituent of early MT-CO1 assembly intermediates. The protein is Transmembrane protein 223 of Danio rerio (Zebrafish).